The following is a 1513-amino-acid chain: DNA polymerase alpha catalytic subunit (1513 aa).

Positions serine 235–aspartate 254 are disordered. Residues cysteine 1344, cysteine 1347, cysteine 1370, cysteine 1373, cysteine 1404, cysteine 1409, cysteine 1422, and cysteine 1427 each contribute to the Zn(2+) site. The CysA-type zinc-finger motif lies at cysteine 1344–cysteine 1373. Residues cysteine 1404–cysteine 1427 carry the CysB motif motif.

Belongs to the DNA polymerase type-B family.

The protein resides in the nucleus. The catalysed reaction is DNA(n) + a 2'-deoxyribonucleoside 5'-triphosphate = DNA(n+1) + diphosphate. In terms of biological role, polymerase alpha in a complex with DNA primase is a replicative polymerase. This is DNA polymerase alpha catalytic subunit from Oxytricha trifallax (Sterkiella histriomuscorum).